A 546-amino-acid chain; its full sequence is Probable malate:quinone oxidoreductase (546 aa).

It belongs to the MQO family. FAD serves as cofactor.

The enzyme catalyses (S)-malate + a quinone = a quinol + oxaloacetate. It participates in carbohydrate metabolism; tricarboxylic acid cycle; oxaloacetate from (S)-malate (quinone route): step 1/1. The protein is Probable malate:quinone oxidoreductase of Acinetobacter baumannii (strain AB0057).